We begin with the raw amino-acid sequence, 265 residues long: tRNA pseudouridine synthase A (265 aa).

D53 functions as the Nucleophile in the catalytic mechanism. Residue Y111 coordinates substrate.

The protein belongs to the tRNA pseudouridine synthase TruA family. In terms of assembly, homodimer.

The catalysed reaction is uridine(38/39/40) in tRNA = pseudouridine(38/39/40) in tRNA. Formation of pseudouridine at positions 38, 39 and 40 in the anticodon stem and loop of transfer RNAs. This Acinetobacter baumannii (strain AB307-0294) protein is tRNA pseudouridine synthase A.